Consider the following 304-residue polypeptide: ADP-polyphosphate phosphotransferase (304 aa).

This sequence belongs to the polyphosphate kinase 2 (PPK2) family. Class I subfamily.

It catalyses the reaction [phosphate](n) + ATP = [phosphate](n+1) + ADP. Uses inorganic polyphosphate (polyP) as a donor to convert ADP to ATP. In Pseudomonas aeruginosa (strain ATCC 15692 / DSM 22644 / CIP 104116 / JCM 14847 / LMG 12228 / 1C / PRS 101 / PAO1), this protein is ADP-polyphosphate phosphotransferase.